The primary structure comprises 610 residues: Glutamine--fructose-6-phosphate aminotransferase [isomerizing] (610 aa).

Residue cysteine 2 is the Nucleophile; for GATase activity of the active site. The Glutamine amidotransferase type-2 domain maps to 2 to 217 (CGIVGYVGQK…DKEFVVLTND (216 aa)). SIS domains follow at residues 284 to 424 (ITKE…LKGS) and 453 to 600 (LIKE…VDKP). Catalysis depends on lysine 605, which acts as the For Fru-6P isomerization activity.

Homodimer.

The protein resides in the cytoplasm. The enzyme catalyses D-fructose 6-phosphate + L-glutamine = D-glucosamine 6-phosphate + L-glutamate. Its function is as follows. Catalyzes the first step in hexosamine metabolism, converting fructose-6P into glucosamine-6P using glutamine as a nitrogen source. The sequence is that of Glutamine--fructose-6-phosphate aminotransferase [isomerizing] from Clostridium perfringens (strain 13 / Type A).